The chain runs to 528 residues: 2-isopropylmalate synthase (528 aa).

Residues 12 to 279 enclose the Pyruvate carboxyltransferase domain; the sequence is IRIFDTTLRD…DSSINTPRIV (268 aa). Mn(2+) is bound by residues Asp21, His214, His216, and Asn250. The regulatory domain stretch occupies residues 401-528; it reads RLASMTISDV…TTEAPAPATA (128 aa).

The protein belongs to the alpha-IPM synthase/homocitrate synthase family. LeuA type 1 subfamily. In terms of assembly, homodimer. Mn(2+) is required as a cofactor.

It is found in the cytoplasm. The catalysed reaction is 3-methyl-2-oxobutanoate + acetyl-CoA + H2O = (2S)-2-isopropylmalate + CoA + H(+). It functions in the pathway amino-acid biosynthesis; L-leucine biosynthesis; L-leucine from 3-methyl-2-oxobutanoate: step 1/4. Its function is as follows. Catalyzes the condensation of the acetyl group of acetyl-CoA with 3-methyl-2-oxobutanoate (2-ketoisovalerate) to form 3-carboxy-3-hydroxy-4-methylpentanoate (2-isopropylmalate). The protein is 2-isopropylmalate synthase of Stenotrophomonas maltophilia (strain R551-3).